Reading from the N-terminus, the 893-residue chain is Flippase kinase 1 (893 aa).

The span at 1–23 shows a compositional bias: basic and acidic residues; it reads MAGHHHEHEQERDHEQEHEHDSL. 3 disordered regions span residues 1–124, 129–148, and 163–243; these read MAGH…SSKL, PMTS…PTIP, and QHEH…ERAG. Positions 24-42 are enriched in polar residues; sequence QRPTTGSERTRSISFSKLL. Residues 49–62 show a composition bias toward low complexity; it reads NASSSNNMSVSSVN. Residues 76 to 87 show a composition bias toward polar residues; sequence NNSGSEGQSSRF. Low complexity predominate over residues 96-122; that stretch reads SGNSSKNASAHNSSQSSLEGDSASSSS. Phosphoserine occurs at positions 140, 144, 171, 175, and 185. The span at 206–216 shows a compositional bias: low complexity; the sequence is SQNSNNSSSTS. A compositionally biased stretch (polar residues) spans 228–237; it reads GSQGFSSNNP. Position 300 is a phosphoserine (S300). Polar residues predominate over residues 334–355; that stretch reads DTLNGSPSRGSSKSPTITQTFP. The interval 334-480 is disordered; that stretch reads DTLNGSPSRG…PRRSRRLRTK (147 aa). The span at 370–380 shows a compositional bias: basic and acidic residues; that stretch reads NNDKHDEKEEQ. Residues 381–399 are compositionally biased toward polar residues; it reads QTTTDNKTRNLSPTKQNGK. S414 is modified (phosphoserine). Low complexity predominate over residues 422 to 439; the sequence is ASATSPTSSSARKTSGSS. Position 462 is a phosphoserine (S462). The Protein kinase domain maps to 496–777; that stretch reads FEKIRLLGQG…AADVKKHPFF (282 aa). ATP is bound by residues 502 to 510 and K525; that span reads LGQGDVGKV. Residue D621 is the Proton acceptor of the active site. In terms of domain architecture, AGC-kinase C-terminal spans 778–861; it reads KKVQWSLLRN…MSLMEQDNNS (84 aa). The disordered stretch occupies residues 874 to 893; it reads AYTPNSNRSRSNSHRTFFKR. Positions 884-893 are enriched in basic residues; that stretch reads SNSHRTFFKR.

Belongs to the protein kinase superfamily. Ser/Thr protein kinase family. KIN82 subfamily. In terms of processing, the N-terminal non-catalytic domain is phosphorylated by YPK1.

It is found in the cytoplasm. It localises to the cell membrane. It catalyses the reaction L-seryl-[protein] + ATP = O-phospho-L-seryl-[protein] + ADP + H(+). It carries out the reaction L-threonyl-[protein] + ATP = O-phospho-L-threonyl-[protein] + ADP + H(+). With respect to regulation, down-regulated by YKP1 phosphorylation. This effect is counteracted in the presence of mannosyl-inositolphosphorylceramide (MIPC). Flippase activator that phosphorylates DNF1 and DNF2 and which is involved in the generation of phospholipid asymmetry in membranes by the inward translocation of phospholipids and in the retrieval pathway from early endosomes to the trans-Golgi network (TGN). Also phosphorylates the N-terminal half of YPK1. Involved in pheromone-response. In Saccharomyces cerevisiae (strain ATCC 204508 / S288c) (Baker's yeast), this protein is Flippase kinase 1 (FPK1).